The following is a 310-amino-acid chain: Signal peptidase I (310 aa).

Residues 5–25 form a helical membrane-spanning segment; sequence LSSFLLASSLITGTLWIINKI. Topologically, residues 26 to 57 are cytoplasmic; it reads LSHNLLDSKIPFNIKKSKIYYKSKQVVQTFAS. The chain crosses the membrane as a helical span at residues 58-78; that stretch reads FFPILIIVFIIRTFICEPFQI. At 79 to 310 the chain is on the extracellular side; the sequence is PSESMMPTLL…IQFDRIGNIY (232 aa). Active-site residues include S82 and K137.

It belongs to the peptidase S26 family.

Its subcellular location is the cell membrane. It carries out the reaction Cleavage of hydrophobic, N-terminal signal or leader sequences from secreted and periplasmic proteins.. This chain is Signal peptidase I (lepB), found in Buchnera aphidicola subsp. Baizongia pistaciae (strain Bp).